Here is a 305-residue protein sequence, read N- to C-terminus: Serine/threonine-protein kinase 16 (305 aa).

G2 carries N-myristoyl glycine lipidation. S-palmitoyl cysteine attachment occurs at residues C6 and C8. Positions 20 to 293 constitute a Protein kinase domain; that stretch reads YLFIQKLGEG…PLLLSQLEAL (274 aa). Residues 26–34 and K49 each bind ATP; that span reads LGEGGFSYV. D148 functions as the Proton acceptor in the catalytic mechanism. The tract at residues 166–202 is activation loop; sequence DLGSMNQACIHVEGSRQALTLQDWAAQRCTISYRAPE. T185 bears the Phosphothreonine; by autocatalysis mark. S197 is modified (phosphoserine; by autocatalysis). The residue at position 198 (Y198) is a Phosphotyrosine; by autocatalysis.

The protein belongs to the protein kinase superfamily. Ser/Thr protein kinase family. Monomer. Interacts with DRG1 (via its N-terminal); the interaction phosphorylates DRG1. Mainly autophosphorylated on serine/threonine residues. Also autophosphorylated on Tyr-198. Post-translationally, it is uncertain whether palmitoylation is on Cys-6 and/or Cys-8. As to expression, ubiquitously expressed at very low levels.

The protein localises to the cytoplasm. It localises to the perinuclear region. The protein resides in the membrane. The enzyme catalyses L-seryl-[protein] + ATP = O-phospho-L-seryl-[protein] + ADP + H(+). It catalyses the reaction L-threonyl-[protein] + ATP = O-phospho-L-threonyl-[protein] + ADP + H(+). It carries out the reaction L-tyrosyl-[protein] + ATP = O-phospho-L-tyrosyl-[protein] + ADP + H(+). Its function is as follows. Membrane-associated protein kinase that phosphorylates on serine and threonine residues. In vitro substrates include DRG1, ENO1 and EIF4EBP1. Also autophosphorylates. May be involved in secretory vesicle trafficking or intracellular signaling. May have a role in regulating stromal-epithelial interactions that occur during ductal morphogenesis in the mammary gland. May be involved in TGF-beta signaling. Able to autophosphorylate on Tyr residue; it is however unclear whether it has tyrosine-protein kinase toward other proteins. This chain is Serine/threonine-protein kinase 16 (STK16), found in Homo sapiens (Human).